The sequence spans 169 residues: Putative glycine cleavage system H protein, mitochondrial (169 aa).

Residues 60–142 (VGTVGITSYA…EEEGWICKIK (83 aa)) enclose the Lipoyl-binding domain. Lys-101 carries the N6-lipoyllysine modification. Ser-131 carries the phosphoserine modification.

The protein belongs to the GcvH family. As to quaternary structure, component of the glycine decarboxylase complex (GDC), which is composed of four proteins: P, T, L and H. The cofactor is (R)-lipoate.

It is found in the mitochondrion. Functionally, the glycine cleavage system (glycine decarboxylase complex) catalyzes the degradation of glycine. The H protein shuttles the methylamine group of glycine from the P protein to the T protein. The sequence is that of Putative glycine cleavage system H protein, mitochondrial (gcv3) from Schizosaccharomyces pombe (strain 972 / ATCC 24843) (Fission yeast).